Here is a 139-residue protein sequence, read N- to C-terminus: Dehydrin DHN1 (139 aa).

A disordered region spans residues M1–H139. Gly residues predominate over residues G23 to G42. The span at R49–L58 shows a compositional bias: basic and acidic residues. Over residues R59–S68 the composition is skewed to low complexity. Over residues K83–A98 the composition is skewed to basic and acidic residues. Residues A99 to G109 are compositionally biased toward low complexity. The segment covering T120–H139 has biased composition (basic and acidic residues).

This sequence belongs to the plant dehydrin family.

The chain is Dehydrin DHN1 (DHN1) from Hordeum vulgare (Barley).